Reading from the N-terminus, the 433-residue chain is Indole diterpene prenyltransferase terF (433 aa).

This sequence belongs to the tryptophan dimethylallyltransferase family.

It participates in secondary metabolite biosynthesis. Indole diterpene prenyltransferase; part of the gene cluster that mediates the biosynthesis of terpendoles, indole-diterpene (IDT) mycotoxins including terpendole I, terpendole K, terpendole C, as well as the kinesin Eg5 inhibitor terpendole E. Terpendoles biosynthesis begins with the synthesis of geranylgeranyl diphosphate (GGPP) by a yet unidentified GGPP synthase. Condensation of indole-3-glycerol phosphate with GGPP by the prenyltransferase terC then forms 3-geranylgeranylindole (3-GGI), followed by epoxidation and cyclization of this intermediate (by the FAD-dependent monooxygeanse terM and the terpene cyclase terB) to form paspaline. The cytochrome monooxygenase terQ then hydroxylates paspalline at C-11 to yield terpendole E. The cytochrome monooxygenase terP converts terpendole E to 13-desoxyterpendole I, and terQ converts 13-desoxyterpendole I into terpendole I. TerF and terK are required for conversion of terpendole I to terpendole C which is further converted to terpendole K. This Tolypocladium album (Soil fungus) protein is Indole diterpene prenyltransferase terF.